Consider the following 454-residue polypeptide: ESX-1 secretion-associated protein EspB (454 aa).

Disordered stretches follow at residues 17-40 (RADE…SGLT), 82-128 (GEVE…AGES), and 391-454 (AGQG…QDNK). Gly residues predominate over residues 391 to 422 (AGQGGGAAGRGMAGGGMGMPMGGAGQGQGGAK).

It belongs to the EspB family. Post-translationally, cleaved at close to the C-terminus during secretion.

It is found in the secreted. This Mycobacterium marinum (strain ATCC BAA-535 / M) protein is ESX-1 secretion-associated protein EspB.